The chain runs to 79 residues: U-myrmeciitoxin(01)-Mg9a (79 aa).

Positions 1–21 (MKLSCLLLTLAIIFVLTIVHA) are cleaved as a signal peptide. A propeptide spanning residues 22–48 (PNVEAKALANPESDAIGFADAVGEADP) is cleaved from the precursor. Q78 is modified (glutamine amide).

Expressed by the venom gland.

The protein localises to the secreted. In terms of biological role, may have antimicrobial properties, like most ant linear peptides. This is U-myrmeciitoxin(01)-Mg9a from Myrmecia gulosa (Red bulldog ant).